A 634-amino-acid chain; its full sequence is Probable potassium transport system protein Kup (634 aa).

12 helical membrane-spanning segments follow: residues Leu21–Leu41, Val58–Val78, Met110–Ile130, Pro152–Gly172, Ala179–Met199, Trp223–Tyr243, Trp258–Leu278, Ala296–Ile316, Ile348–Phe368, Ala377–Ala397, Val403–Phe423, and Ile427–Leu447.

This sequence belongs to the HAK/KUP transporter (TC 2.A.72) family.

The protein localises to the cell inner membrane. The enzyme catalyses K(+)(in) + H(+)(in) = K(+)(out) + H(+)(out). Transport of potassium into the cell. Likely operates as a K(+):H(+) symporter. The polypeptide is Probable potassium transport system protein Kup (Xanthomonas euvesicatoria pv. vesicatoria (strain 85-10) (Xanthomonas campestris pv. vesicatoria)).